Consider the following 139-residue polypeptide: Large ribosomal subunit protein uL16 (139 aa).

The segment covering 1 to 19 (MLIPRKVKHRKQHHPKRSG) has biased composition (basic residues). The interval 1–22 (MLIPRKVKHRKQHHPKRSGVAK) is disordered.

Belongs to the universal ribosomal protein uL16 family. As to quaternary structure, part of the 50S ribosomal subunit.

Its function is as follows. Binds 23S rRNA and is also seen to make contacts with the A and possibly P site tRNAs. The polypeptide is Large ribosomal subunit protein uL16 (Acidothermus cellulolyticus (strain ATCC 43068 / DSM 8971 / 11B)).